Consider the following 530-residue polypeptide: Bifunctional purine biosynthesis protein PurH (530 aa).

An MGS-like domain is found at 2–150 (TDHPRRVTRA…KNHDDVAVVV (149 aa)).

It belongs to the PurH family.

The catalysed reaction is (6R)-10-formyltetrahydrofolate + 5-amino-1-(5-phospho-beta-D-ribosyl)imidazole-4-carboxamide = 5-formamido-1-(5-phospho-D-ribosyl)imidazole-4-carboxamide + (6S)-5,6,7,8-tetrahydrofolate. The enzyme catalyses IMP + H2O = 5-formamido-1-(5-phospho-D-ribosyl)imidazole-4-carboxamide. The protein operates within purine metabolism; IMP biosynthesis via de novo pathway; 5-formamido-1-(5-phospho-D-ribosyl)imidazole-4-carboxamide from 5-amino-1-(5-phospho-D-ribosyl)imidazole-4-carboxamide (10-formyl THF route): step 1/1. It functions in the pathway purine metabolism; IMP biosynthesis via de novo pathway; IMP from 5-formamido-1-(5-phospho-D-ribosyl)imidazole-4-carboxamide: step 1/1. This Bradyrhizobium diazoefficiens (strain JCM 10833 / BCRC 13528 / IAM 13628 / NBRC 14792 / USDA 110) protein is Bifunctional purine biosynthesis protein PurH.